The chain runs to 104 residues: Large ribosomal subunit protein uL24 (104 aa).

This sequence belongs to the universal ribosomal protein uL24 family. As to quaternary structure, part of the 50S ribosomal subunit.

In terms of biological role, one of two assembly initiator proteins, it binds directly to the 5'-end of the 23S rRNA, where it nucleates assembly of the 50S subunit. Its function is as follows. One of the proteins that surrounds the polypeptide exit tunnel on the outside of the subunit. The sequence is that of Large ribosomal subunit protein uL24 from Maricaulis maris (strain MCS10) (Caulobacter maris).